A 569-amino-acid polypeptide reads, in one-letter code: Potassium-transporting ATPase potassium-binding subunit (569 aa).

The next 10 membrane-spanning stretches (helical) occupy residues 11 to 31 (LLLALVFLTIKPLGLYIACVF), 64 to 84 (LAYTLAMLAFNAAGFLALYGI), 135 to 155 (AGLAVQNFLSAATGIAIALAV), 179 to 199 (LYLLLPMSIVLALVFVWMGIP), 258 to 278 (FNILAMMSITMALIYAFGKMV), 285 to 305 (WALIASVAVLLIAGIAAVYIA), 384 to 404 (GLYGLIVFCVLTVFVAGLMVG), 423 to 443 (MLAVLVLPFAILGFSAIAAVL), 490 to 510 (LGISMALGRFAYAVPVLAIAG), and 531 to 551 (LFVGLLVAIIIILGGLQYFPA).

It belongs to the KdpA family. The system is composed of three essential subunits: KdpA, KdpB and KdpC.

It is found in the cell inner membrane. Its function is as follows. Part of the high-affinity ATP-driven potassium transport (or Kdp) system, which catalyzes the hydrolysis of ATP coupled with the electrogenic transport of potassium into the cytoplasm. This subunit binds the periplasmic potassium ions and delivers the ions to the membrane domain of KdpB through an intramembrane tunnel. In Allorhizobium ampelinum (strain ATCC BAA-846 / DSM 112012 / S4) (Agrobacterium vitis (strain S4)), this protein is Potassium-transporting ATPase potassium-binding subunit.